We begin with the raw amino-acid sequence, 604 residues long: Glutamine--fructose-6-phosphate aminotransferase [isomerizing] (604 aa).

Cys2 (nucleophile; for GATase activity) is an active-site residue. Residues 2 to 218 (CGIVGVVGNR…DKELVILTKD (217 aa)) form the Glutamine amidotransferase type-2 domain. 2 SIS domains span residues 284-423 (IVKT…ANGK) and 456-594 (VEKL…VDKP). Residue Lys599 is the For Fru-6P isomerization activity of the active site.

Homodimer.

It is found in the cytoplasm. The enzyme catalyses D-fructose 6-phosphate + L-glutamine = D-glucosamine 6-phosphate + L-glutamate. In terms of biological role, catalyzes the first step in hexosamine metabolism, converting fructose-6P into glucosamine-6P using glutamine as a nitrogen source. The polypeptide is Glutamine--fructose-6-phosphate aminotransferase [isomerizing] (Streptococcus pyogenes serotype M6 (strain ATCC BAA-946 / MGAS10394)).